Reading from the N-terminus, the 232-residue chain is U-scoloptoxin(11)-Sa3a (232 aa).

A signal peptide spans 1–21 (MFQFCLLILLLAPGRFFSALG).

This sequence belongs to the scoloptoxin-11 family. Post-translationally, contains 8 disulfide bonds. In terms of tissue distribution, expressed by the venom gland.

It is found in the secreted. This Scolopendra alternans (Florida Keys giant centipede) protein is U-scoloptoxin(11)-Sa3a.